The following is a 333-amino-acid chain: 4-hydroxy-3-methylbut-2-enyl diphosphate reductase (333 aa).

Position 20 (Cys20) interacts with [4Fe-4S] cluster. Positions 49 and 82 each coordinate (2E)-4-hydroxy-3-methylbut-2-enyl diphosphate. Dimethylallyl diphosphate contacts are provided by His49 and His82. Residues His49 and His82 each coordinate isopentenyl diphosphate. Cys104 provides a ligand contact to [4Fe-4S] cluster. His132 serves as a coordination point for (2E)-4-hydroxy-3-methylbut-2-enyl diphosphate. His132 contributes to the dimethylallyl diphosphate binding site. His132 serves as a coordination point for isopentenyl diphosphate. Glu134 serves as the catalytic Proton donor. Thr172 serves as a coordination point for (2E)-4-hydroxy-3-methylbut-2-enyl diphosphate. Cys202 contributes to the [4Fe-4S] cluster binding site. 4 residues coordinate (2E)-4-hydroxy-3-methylbut-2-enyl diphosphate: Ser230, Ser231, Asn232, and Ser274. Dimethylallyl diphosphate contacts are provided by Ser230, Ser231, Asn232, and Ser274. Isopentenyl diphosphate is bound by residues Ser230, Ser231, Asn232, and Ser274.

This sequence belongs to the IspH family. Requires [4Fe-4S] cluster as cofactor.

The enzyme catalyses isopentenyl diphosphate + 2 oxidized [2Fe-2S]-[ferredoxin] + H2O = (2E)-4-hydroxy-3-methylbut-2-enyl diphosphate + 2 reduced [2Fe-2S]-[ferredoxin] + 2 H(+). It catalyses the reaction dimethylallyl diphosphate + 2 oxidized [2Fe-2S]-[ferredoxin] + H2O = (2E)-4-hydroxy-3-methylbut-2-enyl diphosphate + 2 reduced [2Fe-2S]-[ferredoxin] + 2 H(+). Its pathway is isoprenoid biosynthesis; dimethylallyl diphosphate biosynthesis; dimethylallyl diphosphate from (2E)-4-hydroxy-3-methylbutenyl diphosphate: step 1/1. It participates in isoprenoid biosynthesis; isopentenyl diphosphate biosynthesis via DXP pathway; isopentenyl diphosphate from 1-deoxy-D-xylulose 5-phosphate: step 6/6. Functionally, catalyzes the conversion of 1-hydroxy-2-methyl-2-(E)-butenyl 4-diphosphate (HMBPP) into a mixture of isopentenyl diphosphate (IPP) and dimethylallyl diphosphate (DMAPP). Acts in the terminal step of the DOXP/MEP pathway for isoprenoid precursor biosynthesis. This Polaromonas sp. (strain JS666 / ATCC BAA-500) protein is 4-hydroxy-3-methylbut-2-enyl diphosphate reductase.